The chain runs to 336 residues: Ferredoxin--NADP reductase (336 aa).

FAD contacts are provided by Glu34, Gln42, Tyr47, Val87, Phe121, Asp286, and Ser326.

It belongs to the ferredoxin--NADP reductase type 2 family. Homodimer. The cofactor is FAD.

The enzyme catalyses 2 reduced [2Fe-2S]-[ferredoxin] + NADP(+) + H(+) = 2 oxidized [2Fe-2S]-[ferredoxin] + NADPH. This Leuconostoc mesenteroides subsp. mesenteroides (strain ATCC 8293 / DSM 20343 / BCRC 11652 / CCM 1803 / JCM 6124 / NCDO 523 / NBRC 100496 / NCIMB 8023 / NCTC 12954 / NRRL B-1118 / 37Y) protein is Ferredoxin--NADP reductase.